The sequence spans 236 residues: MAIYLTELDSTFNFPSPYEALSDPNGLLAFGGDLDPHRILSGYYQGIFPWYGPGEPILWWSPSPRAVFDPLTFKPSKSLKKFQRKHQYKVTINQATEHVIQLCSSTRPADETWLNEEMQAAYIQLSNLGHCHSVEVWHDNTLVGGLYGISVGQLFCGESMFSLKDNASKIALWYLCTHLASKHGQLIDCQVMNPHLASLGAFELDRDEFIQKLLSLREKQTASDTFTPQVLQDSES.

Belongs to the L/F-transferase family.

The protein localises to the cytoplasm. The catalysed reaction is N-terminal L-lysyl-[protein] + L-leucyl-tRNA(Leu) = N-terminal L-leucyl-L-lysyl-[protein] + tRNA(Leu) + H(+). It catalyses the reaction N-terminal L-arginyl-[protein] + L-leucyl-tRNA(Leu) = N-terminal L-leucyl-L-arginyl-[protein] + tRNA(Leu) + H(+). The enzyme catalyses L-phenylalanyl-tRNA(Phe) + an N-terminal L-alpha-aminoacyl-[protein] = an N-terminal L-phenylalanyl-L-alpha-aminoacyl-[protein] + tRNA(Phe). Its function is as follows. Functions in the N-end rule pathway of protein degradation where it conjugates Leu, Phe and, less efficiently, Met from aminoacyl-tRNAs to the N-termini of proteins containing an N-terminal arginine or lysine. This chain is Leucyl/phenylalanyl-tRNA--protein transferase, found in Vibrio parahaemolyticus serotype O3:K6 (strain RIMD 2210633).